A 178-amino-acid chain; its full sequence is Phosphopantetheine adenylyltransferase (178 aa).

T17 contacts substrate. ATP is bound by residues 17–18 and H25; that span reads TF. K49, L86, and R100 together coordinate substrate. ATP contacts are provided by residues 101 to 103, E111, and 136 to 142; these read GLR and LQPVASR.

Belongs to the bacterial CoaD family. In terms of assembly, homohexamer. Requires Mg(2+) as cofactor.

It localises to the cytoplasm. It catalyses the reaction (R)-4'-phosphopantetheine + ATP + H(+) = 3'-dephospho-CoA + diphosphate. The protein operates within cofactor biosynthesis; coenzyme A biosynthesis; CoA from (R)-pantothenate: step 4/5. Reversibly transfers an adenylyl group from ATP to 4'-phosphopantetheine, yielding dephospho-CoA (dPCoA) and pyrophosphate. This chain is Phosphopantetheine adenylyltransferase, found in Zymomonas mobilis subsp. mobilis (strain ATCC 31821 / ZM4 / CP4).